The primary structure comprises 115 residues: Large ribosomal subunit protein bL19 (115 aa).

The protein belongs to the bacterial ribosomal protein bL19 family.

Its function is as follows. This protein is located at the 30S-50S ribosomal subunit interface and may play a role in the structure and function of the aminoacyl-tRNA binding site. This is Large ribosomal subunit protein bL19 from Streptococcus equi subsp. equi (strain 4047).